Consider the following 84-residue polypeptide: uncharacterized protein (84 aa).

A run of 2 helical transmembrane segments spans residues 27-47 (INHH…LAML) and 52-72 (IGHV…FVLI).

It to M.tuberculosis Rv2876.

It localises to the cell membrane. This is an uncharacterized protein from Mycobacterium leprae (strain TN).